Consider the following 70-residue polypeptide: MKADIHPAYAEITATCTCGNVIKVNSTAGKALHLDVCGACHPFYTGTQKIVDTGGRIDKFNKRFGALGKK.

Zn(2+) is bound by residues Cys-16, Cys-18, Cys-37, and Cys-40.

This sequence belongs to the bacterial ribosomal protein bL31 family. Type A subfamily. In terms of assembly, part of the 50S ribosomal subunit. Requires Zn(2+) as cofactor.

Functionally, binds the 23S rRNA. The protein is Large ribosomal subunit protein bL31 of Shewanella sediminis (strain HAW-EB3).